The sequence spans 281 residues: Nucleotide-binding protein DNO_0399 (281 aa).

Residue 6 to 13 (GMSGAGKS) coordinates ATP. 55–58 (DARN) contributes to the GTP binding site.

This sequence belongs to the RapZ-like family.

Its function is as follows. Displays ATPase and GTPase activities. The chain is Nucleotide-binding protein DNO_0399 from Dichelobacter nodosus (strain VCS1703A).